We begin with the raw amino-acid sequence, 312 residues long: Glyoxylate/hydroxypyruvate reductase A (312 aa).

R227 is an active-site residue. Catalysis depends on H275, which acts as the Proton donor.

Belongs to the D-isomer specific 2-hydroxyacid dehydrogenase family. GhrA subfamily.

The protein localises to the cytoplasm. The enzyme catalyses glycolate + NADP(+) = glyoxylate + NADPH + H(+). It catalyses the reaction (R)-glycerate + NAD(+) = 3-hydroxypyruvate + NADH + H(+). It carries out the reaction (R)-glycerate + NADP(+) = 3-hydroxypyruvate + NADPH + H(+). Catalyzes the NADPH-dependent reduction of glyoxylate and hydroxypyruvate into glycolate and glycerate, respectively. This chain is Glyoxylate/hydroxypyruvate reductase A, found in Citrobacter koseri (strain ATCC BAA-895 / CDC 4225-83 / SGSC4696).